The primary structure comprises 173 residues: Alpha-crystallin A chain (173 aa).

Position 1 is an N-acetylmethionine (M1). Residues 1–63 form a required for complex formation with BFSP1 and BFSP2 region; the sequence is MDIAIQHPWF…RSVLDSGISE (63 aa). Deamidated glutamine; partial is present on Q6. The residue at position 45 (S45) is a Phosphoserine. Q50 bears the Deamidated glutamine; partial mark. The sHSP domain occupies 52–162; sequence VFRSVLDSGI…GHSERAIPVS (111 aa). K70 and K99 each carry N6-acetyllysine. H100 is a binding site for Zn(2+). N101 is subject to Deamidated asparagine; partial. Zn(2+)-binding residues include E102 and H107. S122 is modified (phosphoserine). N123 carries the deamidated asparagine; partial modification. The disordered stretch occupies residues 144–173; the sequence is PKVPSGVDAGHSERAIPVSREEKPSSAPSS. Positions 153 to 167 are enriched in basic and acidic residues; that stretch reads GHSERAIPVSREEKP. A Zn(2+)-binding site is contributed by H154. Residue S162 is glycosylated (O-linked (GlcNAc) serine).

This sequence belongs to the small heat shock protein (HSP20) family. As to quaternary structure, heteromer composed of three CRYAA and one CRYAB subunits. Inter-subunit bridging via zinc ions enhances stability, which is crucial as there is no protein turn over in the lens. Can also form homodimers and homotetramers (dimers of dimers) which serve as the building blocks of homooligomers. Within homooligomers, the zinc-binding motif is created from residues of 3 different molecules. His-100 and Glu-102 from one molecule are ligands of the zinc ion, and His-107 and His-154 residues from additional molecules complete the site with tetrahedral coordination geometry. Part of a complex required for lens intermediate filament formation composed of BFSP1, BFSP2 and CRYAA. Acetylation at Lys-70 may increase chaperone activity. In terms of processing, undergoes age-dependent proteolytical cleavage at the C-terminus.

It is found in the cytoplasm. Its subcellular location is the nucleus. Contributes to the transparency and refractive index of the lens. Acts as a chaperone, preventing aggregation of various proteins under a wide range of stress conditions. Required for the correct formation of lens intermediate filaments as part of a complex composed of BFSP1, BFSP2 and CRYAA. This chain is Alpha-crystallin A chain (CRYAA), found in Halichoerus grypus (Gray seal).